The following is a 691-amino-acid chain: Calcium-binding and coiled-coil domain-containing protein 1 (691 aa).

Residues 1-30 (MEESPLSRAPSRGGVNFLNVARTYIPNTKV) are p300 KIX-binding. An N-terminal AD (CTNNB1 binding site) region spans residues 1–190 (MEESPLSRAP…VQELERALAT (190 aa)). Ser-4 bears the Phosphoserine mark. The interaction with GATA1 stretch occupies residues 45–125 (SDWIGIFKVE…FQFREPRPMD (81 aa)). 3 coiled-coil regions span residues 145–205 (KATV…YKGI), 232–339 (ELED…AELE), and 417–514 (QSVE…ADEK). The C-terminal AD (CTNNB1 binding site); interaction with CCAR1 stretch occupies residues 501–691 (RKLEARLEKV…FSTQDPFTFE (191 aa)). Residues 513 to 604 (EKWNEDATTE…SDSEAEDEKS (92 aa)) are disordered. The UBZ1-type zinc finger occupies 653–679 (WKECPICKERFPAESDKDALEDHMDGH). 4 residues coordinate Zn(2+): Cys-656, Cys-659, His-675, and His-679.

Belongs to the CALCOCO family. In terms of assembly, part of a calphoglin complex consisting of CALCOCO1, PPA1 and PGM. Interacts with the bHLH-PAS domains of GRIP1, AHR and ARNT. Interacts with CTNNB1 via both its N- and C-terminal regions. Interacts with EP300. Interacts with CCAR1 (via N-terminus) and GATA1.

The protein localises to the cytoplasm. The protein resides in the nucleus. Its function is as follows. Functions as a coactivator for aryl hydrocarbon and nuclear receptors (NR). Recruited to promoters through its contact with the N-terminal basic helix-loop-helix-Per-Arnt-Sim (PAS) domain of transcription factors or coactivators, such as NCOA2. During ER-activation acts synergistically in combination with other NCOA2-binding proteins, such as EP300, CREBBP and CARM1. Involved in the transcriptional activation of target genes in the Wnt/CTNNB1 pathway. Functions as a secondary coactivator in LEF1-mediated transcriptional activation via its interaction with CTNNB1. Coactivator function for nuclear receptors and LEF1/CTNNB1 involves differential utilization of two different activation regions. In association with CCAR1 enhances GATA1- and MED1-mediated transcriptional activation from the gamma-globin promoter during erythroid differentiation of K562 erythroleukemia cells. Seems to enhance inorganic pyrophosphatase thus activating phosphogluomutase (PMG). Probably functions as a component of the calphoglin complex, which is involved in linking cellular metabolism (phosphate and glucose metabolism) with other core functions including protein synthesis and degradation, calcium signaling and cell growth. The sequence is that of Calcium-binding and coiled-coil domain-containing protein 1 (CALCOCO1) from Pongo abelii (Sumatran orangutan).